We begin with the raw amino-acid sequence, 418 residues long: MSVDEKPIKIKVEKVSKIFGKQTKKAVQMLANGKTKKEILKATGSTVGVNQADFEVYDGEIFVIMGLSGSGKSTLVRMLNRLIEPTAGNIYIDGDMITNMSKDQLREVRRKKISMVFQKFALFPHRTILENTEYGLELQGVDKQERQQKALESLKLVGLEGFEHQYPDQLSGGMQQRVGLARALTNDPDILLMDEAFSALDPLIRKDMQDELLDLHDNVGKTIIFITHDLDEALRIGDRIVLMKDGNIVQIGTPEEILMNPSNEYVEKFVEDVDLSKVLTAGHIMKRAETVRIDKGPRVALTLMKNLGISSIYAVDKQKKLLGVIYASDAKKAAESDLSLQDILNTEFTTVPENTYLTEIFDVVSDANIPIAVVDEKQRMKGIVVRGALIGALAGNNEYINAEGTNEQTQDPSAQEVK.

An ABC transporter domain is found at 34-270 (KTKKEILKAT…PSNEYVEKFV (237 aa)). 66-73 (GLSGSGKS) lines the ATP pocket. 2 CBS domains span residues 284-340 (IMKR…DLSL) and 344-403 (LNTE…INAE).

The protein belongs to the ABC transporter superfamily. As to quaternary structure, the complex is composed of two ATP-binding proteins (OpuAA), two transmembrane proteins (OpuAB) and a solute-binding protein (OpuAC).

The enzyme catalyses a quaternary ammonium(out) + ATP + H2O = a quaternary ammonium(in) + ADP + phosphate + H(+). Its function is as follows. Involved in a multicomponent binding-protein-dependent transport system for glycine betaine. Probably responsible for energy coupling to the transport system. The sequence is that of Glycine betaine transport ATP-binding protein OpuAA (opuAA) from Bacillus subtilis (strain 168).